The sequence spans 134 residues: Probable glycine cleavage system H protein (134 aa).

The region spanning 29-110 (TVLVGITDYA…PYGAWIAKIK (82 aa)) is the Lipoyl-binding domain. The residue at position 70 (Lys-70) is an N6-lipoyllysine.

It belongs to the GcvH family. The glycine cleavage system is composed of four proteins: P, T, L and H. It depends on (R)-lipoate as a cofactor.

The glycine cleavage system catalyzes the degradation of glycine. The H protein shuttles the methylamine group of glycine from the P protein to the T protein. In Pyrococcus abyssi (strain GE5 / Orsay), this protein is Probable glycine cleavage system H protein.